The primary structure comprises 59 residues: UPF0434 protein Shewmr7_2490 (59 aa).

It belongs to the UPF0434 family.

The polypeptide is UPF0434 protein Shewmr7_2490 (Shewanella sp. (strain MR-7)).